Consider the following 153-residue polypeptide: Lipoprotein signal peptidase (153 aa).

The next 2 helical transmembrane spans lie at 61-81 and 85-105; these read YFFV…LVKN and SLWL…NFID. Residues Asp114 and Asp130 contribute to the active site. The helical transmembrane segment at 125-145 threads the bilayer; the sequence is IFNVADSYLTVGVLLLILILW.

Belongs to the peptidase A8 family.

The protein resides in the cell membrane. It catalyses the reaction Release of signal peptides from bacterial membrane prolipoproteins. Hydrolyzes -Xaa-Yaa-Zaa-|-(S,diacylglyceryl)Cys-, in which Xaa is hydrophobic (preferably Leu), and Yaa (Ala or Ser) and Zaa (Gly or Ala) have small, neutral side chains.. It participates in protein modification; lipoprotein biosynthesis (signal peptide cleavage). Its function is as follows. This protein specifically catalyzes the removal of signal peptides from prolipoproteins. The sequence is that of Lipoprotein signal peptidase from Streptococcus thermophilus (strain CNRZ 1066).